A 360-amino-acid polypeptide reads, in one-letter code: uncharacterized protein (360 aa).

Transmembrane regions (helical) follow at residues 26-48, 58-80, 89-111, 126-148, 169-191, 195-214, and 227-249; these read SVCY…SGAT, LHPL…ASVL, VMGL…NIAH, LSTG…SILA, RLAY…PTAL, IPSV…YALL, and CALC…SHMV.

The protein localises to the cell membrane. This is an uncharacterized protein from Treponema pallidum (strain Nichols).